Here is an 837-residue protein sequence, read N- to C-terminus: Neural cell adhesion molecule 2 (837 aa).

The N-terminal stretch at 1–19 (MSLLLSFYLLGLLVSSGQA) is a signal peptide. At 20–697 (LLQVTISLSK…PNIIKDTLFN (678 aa)) the chain is on the extracellular side. Ig-like C2-type domains follow at residues 21–108 (LQVT…ATVV), 113–202 (QKLT…RDII), 208–297 (PPAI…AFLQ), 302–396 (PHII…MYLD), and 401–491 (PKFI…YILA). 2 disulfides stabilise this stretch: C42–C93 and C136–C186. N-linked (GlcNAc...) asparagine glycans are attached at residues N177 and N219. A disulfide bond links C232 and C281. N-linked (GlcNAc...) asparagine glycosylation occurs at N309. C322 and C380 are disulfide-bonded. Residues N406, N419, N445, N474, and N562 are each glycosylated (N-linked (GlcNAc...) asparagine). A disulfide bond links C422 and C475. Fibronectin type-III domains lie at 498 to 591 (SPYG…TLPV) and 593 to 688 (EPSP…PPKP). A helical transmembrane segment spans residues 698–718 (GLGLGAVIGLGVAALLLILVV). Topologically, residues 719–837 (TDVSCFFIRQ…IQSKEDDSKA (119 aa)) are cytoplasmic. Over residues 764 to 785 (GSKEPIVEMRTEDERVTNHEDG) the composition is skewed to basic and acidic residues. The interval 764–818 (GSKEPIVEMRTEDERVTNHEDGSPVNEPNETTPLTEPEKLPLKEEDGKEALNPET) is disordered. At S765 the chain carries Phosphoserine. Position 780 is a phosphothreonine (T780). The residue at position 786 (S786) is a Phosphoserine. A compositionally biased stretch (low complexity) spans 789–798 (NEPNETTPLT). A compositionally biased stretch (basic and acidic residues) spans 799–814 (EPEKLPLKEEDGKEAL).

As to expression, expressed most strongly in adult and fetal brain.

It localises to the cell membrane. May play important roles in selective fasciculation and zone-to-zone projection of the primary olfactory axons. This chain is Neural cell adhesion molecule 2 (NCAM2), found in Homo sapiens (Human).